The sequence spans 285 residues: Short chain dehydrogenase sol3 (285 aa).

Leucine 39, lysine 64, and aspartate 87 together coordinate NADP(+). Residues serine 168 and tyrosine 200 each act as proton donor in the active site. NADP(+)-binding residues include tyrosine 200, lysine 204, and serine 234. Lysine 204 functions as the Lowers pKa of active site Tyr in the catalytic mechanism.

Belongs to the short-chain dehydrogenases/reductases (SDR) family.

Its pathway is phytotoxin biosynthesis. In terms of biological role, short chain dehydrogenase; part of the gene cluster that mediates the biosynthesis of the phytotoxin solanapyrone, a causal agent of early blight disease of potato and tomato. The prosolanapyrone synthase sol1 is a polyketide synthase that produces the octaketide desmethylprosolanapyrone I via sequential condensations of 7 malonyl-CoA units with one acetyl-CoA unit, and one methylation step. The octaketide backbone is further methylated by the sol2 O-methyltransferase to yield prosolanapyrone I. Prosolanapyrone I is hydroxylated to prosolanapyrone II by the cytochrome P450 monooxygenase sol6. The solanapyrone synthase sol5 then catalyzes the oxidation of prosolanapyrone II and the subsequent Diels Alder cycloisomerization of the product prosolanapyrone III to solanapyrones A and D. Solanapyrones A and D are then converted into solanapyrones B and E, respectively, by the sol3 dehydrogenase. The chain is Short chain dehydrogenase sol3 (sol3) from Alternaria solani.